We begin with the raw amino-acid sequence, 264 residues long: Glutamate racemase (264 aa).

Residues 10–11 and 42–43 contribute to the substrate site; these read DS and YG. C73 acts as the Proton donor/acceptor in catalysis. Residue 74 to 75 participates in substrate binding; the sequence is NT. The Proton donor/acceptor role is filled by C183. 184–185 contributes to the substrate binding site; the sequence is TH.

It belongs to the aspartate/glutamate racemases family.

It carries out the reaction L-glutamate = D-glutamate. It functions in the pathway cell wall biogenesis; peptidoglycan biosynthesis. Provides the (R)-glutamate required for cell wall biosynthesis. This is Glutamate racemase from Streptococcus gordonii (strain Challis / ATCC 35105 / BCRC 15272 / CH1 / DL1 / V288).